Consider the following 625-residue polypeptide: MEEEGGGRSCGTTRELQKLKQQAMEYYRENDVPRRLEELLNSTFYLQPADVYGHLANCFSKLAKPPTICKIVGKDVLDGLGLPTLQVDIFCTIQNFPKNVCSVVISTHFEVHENALPELAKAEEAERASAVSTAVQWVNSTITHELQGMAPSDQAEVDHLLRIFFASKVQEDKGRKELEKSLEYSTVPTPLPPVPPPPPPPPPTKKKGQKPGRKDTITEKPIAPAEPVEPVLSGSMAIGAVSLAVAKACAMLLNKPLYLNIALLKHNQEQPTTLSMPLLMVSLVSCGKSSSGKLNLMKEVICIPHPELTTKQGVEMLMEMQKHINKIIEMPSPPKAETKKGHDGSKRGQQQITGKMSHLGCLTINCDSIEQPLLLIQEICANLGLELGTNLHLAINCAGHELMDYNKGKYEVIMGTYKNAAEMVDLYVDLINKYPSIIALIDPFRKEDSEQWDSIYHALGSRCYIIAGTASKSISKLLEQGNISIPKSNGLIIKHTNQTTMSDLVEITNLIDSKKHITVFGSTEGESSDDSLVDLAVGLGVRFIKLGGLSRGERVTKYNRLLTIEEELVQNGTLGFKEEHTFFYFNEEAEKAAEALEAAAAREPLVPTFPTQGVEESAETGASSG.

The disordered stretch occupies residues 184–226; sequence YSTVPTPLPPVPPPPPPPPPTKKKGQKPGRKDTITEKPIAPAE. Pro residues predominate over residues 189-203; that stretch reads TPLPPVPPPPPPPPP. Val300 contacts substrate. Positions 331–350 are disordered; it reads PSPPKAETKKGHDGSKRGQQ. A compositionally biased stretch (basic and acidic residues) spans 336-346; it reads AETKKGHDGSK. Asn497 acts as the Proton acceptor in catalysis. Gly548 serves as a coordination point for substrate. Residues 604–625 are disordered; that stretch reads PLVPTFPTQGVEESAETGASSG.

It belongs to the enolase family. Interacts with ENO1 and AKAP4. In terms of processing, synthesized as an approximately 70-kDa precursor, which then undergoes proteolytic cleavage to an approximately 60-kDa enzyme; HOATZ associates directly or indirectly with ENO4 to mediate this process before its transport to mature flagella.

The catalysed reaction is (2R)-2-phosphoglycerate = phosphoenolpyruvate + H2O. It participates in carbohydrate degradation; glycolysis; pyruvate from D-glyceraldehyde 3-phosphate: step 4/5. In terms of biological role, may be required for sperm motility and function. The polypeptide is Enolase 4 (Homo sapiens (Human)).